The chain runs to 525 residues: Protein nucleotidyltransferase YdiU (525 aa).

ATP-binding residues include Gly-107, Gly-109, Arg-110, Lys-129, Asp-141, Gly-142, Arg-192, and Arg-199. Asp-268 serves as the catalytic Proton acceptor. 2 residues coordinate Mg(2+): Asn-269 and Asp-278. ATP is bound at residue Asp-278.

This sequence belongs to the SELO family. Mg(2+) is required as a cofactor. It depends on Mn(2+) as a cofactor.

It catalyses the reaction L-seryl-[protein] + ATP = 3-O-(5'-adenylyl)-L-seryl-[protein] + diphosphate. The enzyme catalyses L-threonyl-[protein] + ATP = 3-O-(5'-adenylyl)-L-threonyl-[protein] + diphosphate. It carries out the reaction L-tyrosyl-[protein] + ATP = O-(5'-adenylyl)-L-tyrosyl-[protein] + diphosphate. The catalysed reaction is L-histidyl-[protein] + UTP = N(tele)-(5'-uridylyl)-L-histidyl-[protein] + diphosphate. It catalyses the reaction L-seryl-[protein] + UTP = O-(5'-uridylyl)-L-seryl-[protein] + diphosphate. The enzyme catalyses L-tyrosyl-[protein] + UTP = O-(5'-uridylyl)-L-tyrosyl-[protein] + diphosphate. In terms of biological role, nucleotidyltransferase involved in the post-translational modification of proteins. It can catalyze the addition of adenosine monophosphate (AMP) or uridine monophosphate (UMP) to a protein, resulting in modifications known as AMPylation and UMPylation. This is Protein nucleotidyltransferase YdiU from Ralstonia nicotianae (strain ATCC BAA-1114 / GMI1000) (Ralstonia solanacearum).